A 104-amino-acid chain; its full sequence is Urease subunit beta (104 aa).

This sequence belongs to the urease beta subunit family. In terms of assembly, heterotrimer of UreA (gamma), UreB (beta) and UreC (alpha) subunits. Three heterotrimers associate to form the active enzyme.

Its subcellular location is the cytoplasm. It catalyses the reaction urea + 2 H2O + H(+) = hydrogencarbonate + 2 NH4(+). It participates in nitrogen metabolism; urea degradation; CO(2) and NH(3) from urea (urease route): step 1/1. In Methylocella silvestris (strain DSM 15510 / CIP 108128 / LMG 27833 / NCIMB 13906 / BL2), this protein is Urease subunit beta.